We begin with the raw amino-acid sequence, 437 residues long: 3-ketoacyl-CoA thiolase (437 aa).

The Acyl-thioester intermediate role is filled by Cys99. Active-site proton acceptor residues include His392 and Cys422.

This sequence belongs to the thiolase-like superfamily. Thiolase family. In terms of assembly, heterotetramer of two alpha chains (FadJ) and two beta chains (FadI).

The protein resides in the cytoplasm. The enzyme catalyses an acyl-CoA + acetyl-CoA = a 3-oxoacyl-CoA + CoA. The protein operates within lipid metabolism; fatty acid beta-oxidation. Functionally, catalyzes the final step of fatty acid oxidation in which acetyl-CoA is released and the CoA ester of a fatty acid two carbons shorter is formed. This chain is 3-ketoacyl-CoA thiolase, found in Pectobacterium atrosepticum (strain SCRI 1043 / ATCC BAA-672) (Erwinia carotovora subsp. atroseptica).